The sequence spans 903 residues: Translation initiation factor IF-2 (903 aa).

Residues 49-314 form a disordered region; sequence LNREHGSGPD…GSSLQQGFNK (266 aa). A compositionally biased stretch (polar residues) spans 68–82; sequence STLNIQGTGGKSKSV. Composition is skewed to basic and acidic residues over residues 93–163 and 174–225; these read VKRD…EAAE and EVSK…ENAT. Positions 265–279 are enriched in basic residues; it reads GRARPAKVARQKKSN. The span at 280–293 shows a compositional bias: basic and acidic residues; it reads KHSESKADREEARA. Residues 402–571 enclose the tr-type G domain; that stretch reads PRAPVVTIMG…LLQSEVLELK (170 aa). The tract at residues 411–418 is G1; that stretch reads GHVDHGKT. Residue 411–418 coordinates GTP; that stretch reads GHVDHGKT. Residues 436–440 are G2; it reads GITQH. Residues 457–460 form a G3 region; the sequence is DTPG. Residues 457–461 and 511–514 each bind GTP; these read DTPGH and NKID. The interval 511-514 is G4; the sequence is NKID. A G5 region spans residues 547-549; sequence SAK.

The protein belongs to the TRAFAC class translation factor GTPase superfamily. Classic translation factor GTPase family. IF-2 subfamily.

The protein localises to the cytoplasm. Functionally, one of the essential components for the initiation of protein synthesis. Protects formylmethionyl-tRNA from spontaneous hydrolysis and promotes its binding to the 30S ribosomal subunits. Also involved in the hydrolysis of GTP during the formation of the 70S ribosomal complex. This is Translation initiation factor IF-2 from Cronobacter sakazakii (strain ATCC BAA-894) (Enterobacter sakazakii).